We begin with the raw amino-acid sequence, 600 residues long: Polypeptide N-acetylgalactosaminyltransferase (600 aa).

At 1–7 the chain is on the cytoplasmic side; that stretch reads MVRRKLR. A helical; Signal-anchor for type II membrane protein transmembrane segment spans residues 8-28; it reads LLVILAGIWLVGIVVYLFKGD. Topologically, residues 29 to 600 are lumenal; the sequence is DQSEFEKRVI…KWTFSLSKNR (572 aa). Cystine bridges form between C154–C382, C373–C451, C484–C501, C524–C541, and C567–C583. Positions 163-268 are catalytic subdomain A; sequence LPDTSVIITF…EKWLEPLLDR (106 aa). Residues T171, D204, and R229 each contribute to the substrate site. Position 252 (D252) interacts with Mn(2+). A substrate-binding site is contributed by S253. H254 is a Mn(2+) binding site. The segment at 328–390 is catalytic subdomain B; the sequence is PIRTPMIAGG…PCSRVGHVFR (63 aa). W359 is a substrate binding site. Position 387 (H387) interacts with Mn(2+). Residues R390, H393, and Y395 each coordinate substrate. A Ricin B-type lectin domain is found at 466 to 595; that stretch reads KIPSVQDIAF…SSYTQKWTFS (130 aa).

Belongs to the glycosyltransferase 2 family. GalNAc-T subfamily. Mn(2+) serves as cofactor. O-glycosylated.

It localises to the golgi apparatus membrane. It carries out the reaction L-seryl-[protein] + UDP-N-acetyl-alpha-D-galactosamine = a 3-O-[N-acetyl-alpha-D-galactosaminyl]-L-seryl-[protein] + UDP + H(+). It catalyses the reaction L-threonyl-[protein] + UDP-N-acetyl-alpha-D-galactosamine = a 3-O-[N-acetyl-alpha-D-galactosaminyl]-L-threonyl-[protein] + UDP + H(+). Its pathway is protein modification; protein glycosylation. With respect to regulation, no change in activity by addition of up to 10% methanol or glycerol, or 5% acetonitrile. 40% reduction in activity by 10% acetonitrile or by lyophilization. Activity requires divalent cations, the best being Mn(2+) (10-20 mM), followed by Co(2+), Mg(2+) and Ca(2+). Loss of activity with Cu(2+) or in the presence of EDTA. Inhibited by UDP, but not by UMP, UTP, ADP or GDP nucleotides. No inhibition by galactose, N-acetylglucosamine or N-acetylgalactosamine sugars. Its function is as follows. Catalyzes the initial reaction in O-linked oligosaccharide biosynthesis, the transfer of an N-acetyl-D-galactosamine residue to a serine or threonine residue on the protein receptor. Has a broad substrate specificity. Acceptor peptides include Muc2, Muc5Ac, Muc1a and Muc1a', with Muc2 as the best acceptor. Acts on non-glycosylated and mono- or multi-glycosylated peptide substrates. Transfers preferably to threonine rather than serine residue. Thr-15 is the most preferred site of glycosylation in Muc2 peptide PTTTPITTTTTVTPTPTPTGTQTK having proline residues at position -1, and at positions +1 and +3, where the number represents the distance from the C-terminal and N-terminal hydroxyl amino acid, respectively. Transfer of the N-acetyl-D-galactosamine (GalNAc) is optimal with proline residues at positions -3, -1, +1 and +3, but other amino acids are tolerated, although some, such as phenylalanine, isoleucine or leucine at -1, or lysine at +3 prevent the transfer completely. Second GalNAc is transferred to Muc2 Thr-2 or Thr-13, both of which have two proline residues nearby. Up to nine sites can be glycosylated within Muc2, but eight are used simultaneously since Thr-19 and Thr-21 are not detected to be glycosylated at the same time. Glycosylation is not detected of a potential site, which is next to an already glycosylated site, but only one amino acid is needed in between two glycosylation sites. Ser-5 is the preferred glycosylation site in Muc5Ac peptide GTTPSPVPTTSTTSAP into which up to four GalNAcs can be attached. Only the threonine residues are detected as pontential glycosylation sites in Muc1a APPAHGVTSAPDTRPAPGC and Muc1a' AHGVTSAPDTR peptides. Transferase activity is restricted to UDP-GalNAc as a donor, and none of the nucleotide sugars UDP-Gal, UDP-GlcNAc, GDP-fucose, UDP-xylose, UDP-glucuronic acid or CMP-neuraminic acid are utilized as donors. The sequence is that of Polypeptide N-acetylgalactosaminyltransferase from Biomphalaria glabrata (Bloodfluke planorb).